The primary structure comprises 280 residues: Ribosomal RNA small subunit methyltransferase A (280 aa).

Residues N30, V32, G57, E78, D108, and N125 each contribute to the S-adenosyl-L-methionine site.

It belongs to the class I-like SAM-binding methyltransferase superfamily. rRNA adenine N(6)-methyltransferase family. RsmA subfamily.

It localises to the cytoplasm. The catalysed reaction is adenosine(1518)/adenosine(1519) in 16S rRNA + 4 S-adenosyl-L-methionine = N(6)-dimethyladenosine(1518)/N(6)-dimethyladenosine(1519) in 16S rRNA + 4 S-adenosyl-L-homocysteine + 4 H(+). In terms of biological role, specifically dimethylates two adjacent adenosines (A1518 and A1519) in the loop of a conserved hairpin near the 3'-end of 16S rRNA in the 30S particle. May play a critical role in biogenesis of 30S subunits. The protein is Ribosomal RNA small subunit methyltransferase A of Leifsonia xyli subsp. xyli (strain CTCB07).